A 253-amino-acid chain; its full sequence is Short chain dehydrogenase ple7 (253 aa).

Residues 5–25 (IVIVTGASHGIGLATVNLLLA) form a helical membrane-spanning segment. Positions 8, 116, 148, 152, and 184 each coordinate NADP(+). The active-site Proton acceptor is Tyr-148. Lys-152 functions as the Lowers pKa of active site Tyr in the catalytic mechanism. A glycan (N-linked (GlcNAc...) asparagine) is linked at Asn-187.

This sequence belongs to the short-chain dehydrogenases/reductases (SDR) family.

Its subcellular location is the membrane. It participates in secondary metabolite biosynthesis; terpenoid biosynthesis. In terms of biological role, short chain dehydrogenase; part of the gene cluster that mediates the biosynthesis of pleuromutilin, a tricyclic diterpene showing antibacterial properties. The geranylgeranyl diphosphate (GGPP) synthase ple4 catalyzes the first step in pleuromutilin biosynthesis. GGPP is then substrate of the premutilin synthase (PS) ple3 to yield premutilin. Premutilin synthase is a bifunctional enzyme composed of the fusion of a class II diterpene cyclase (DTC) and a class I diterpene synthase (DTS), with the corresponding domains and active sites containing characteristic aspartate-rich motifs. GGPP is first converted to mutildienyl-diphosphate (MPP) at the class II DTC site. MPP is subsequently further cyclized at the class I DTS site, followed by a 1,5-hydride shift and addition of water prior to terminating deprotonation, to yield premutilin. The cytochrome P450 monooxygenases ple5 and ple6 hydroxylate premutilin at C-11 and C-3, respectively, producing 11-hydroxypremutilin and 3-hydroxypremutilin. The combination of the actions of both ple5 and ple6 leads to the production of 3,11-dihydroxypremutilin. The short chain dehydrogenase ple7 further converts 3,11-dihydroxypremutilin into mutilin. The acetyltransferase ple2 then acetylates mutilin to produce 14-O-acetylmutilin. Finally, the cytochrome P450 monooxygenase ple1 catalyzes hydroxylation on the alpha position of the acetyl side chain of 14-O-acetylmutilin to yield pleuromutilin. This chain is Short chain dehydrogenase ple7, found in Rhodocybe pseudopiperita (Clitopilus pseudopiperitus).